Consider the following 1940-residue polypeptide: Myosin-3 (1940 aa).

In terms of domain architecture, Myosin N-terminal SH3-like spans 33 to 82 (DAKTYCFVVDSKEEYVKGKIKSSQDGKVTVETEDSRTLVVKPEDVYAMNP). A Myosin motor domain is found at 86–779 (DKIEDMAMLT…LLGTLEEMRD (694 aa)). K130 is modified (N6,N6,N6-trimethyllysine). Residue 179-186 (GESGAGKT) participates in ATP binding. Actin-binding regions lie at residues 656-678 (LNKL…IPNE) and 758-772 (KFGH…GLLG). Positions 782–811 (LAKLITRTQAVCRGFLMRVEFQKMMQRRES) constitute an IQ domain. Positions 841-1928 (LKSAETEKEM…NKLRAKTRDF (1088 aa)) form a coiled coil. The disordered stretch occupies residues 1260 to 1289 (ARGKNEEMQRSLSELTTQKSRLQTEAGELS). A compositionally biased stretch (polar residues) spans 1269-1282 (RSLSELTTQKSRLQ).

It belongs to the TRAFAC class myosin-kinesin ATPase superfamily. Myosin family. In terms of assembly, muscle myosin is a hexameric protein that consists of 2 heavy chain subunits (MHC), 2 alkali light chain subunits (MLC) and 2 regulatory light chain subunits (MLC-2).

Its subcellular location is the cytoplasm. The protein resides in the myofibril. Functionally, muscle contraction. This Mus musculus (Mouse) protein is Myosin-3 (Myh3).